We begin with the raw amino-acid sequence, 586 residues long: Dolichyl-diphosphooligosaccharide--protein glycosyltransferase subunit 1 (586 aa).

A signal peptide spans 1 to 15 (MRLLFAIALLGAVFA). Residues 16 to 421 (EDAWKAANVD…EFEFVDMLRE (406 aa)) lie on the Lumenal side of the membrane. A helical membrane pass occupies residues 422-442 (PLLASAFFFSLFFVIIVYSRF). The Cytoplasmic portion of the chain corresponds to 443 to 586 (DFTISSDPAK…NRADSVLASI (144 aa)).

It belongs to the OST1 family. In terms of assembly, component of the oligosaccharyltransferase (OST) complex.

Its subcellular location is the endoplasmic reticulum membrane. It localises to the cytoplasmic granule. The protein operates within protein modification; protein glycosylation. Subunit of the oligosaccharyl transferase (OST) complex that catalyzes the initial transfer of a defined glycan (Glc(3)Man(9)GlcNAc(2) in eukaryotes) from the lipid carrier dolichol-pyrophosphate to an asparagine residue within an Asn-X-Ser/Thr consensus motif in nascent polypeptide chains, the first step in protein N-glycosylation. N-glycosylation occurs cotranslationally and the complex associates with the Sec61 complex at the channel-forming translocon complex that mediates protein translocation across the endoplasmic reticulum (ER). All subunits are required for a maximal enzyme activity. In Caenorhabditis elegans, this protein is Dolichyl-diphosphooligosaccharide--protein glycosyltransferase subunit 1.